The chain runs to 115 residues: Pycsar effector protein TpPycTM (115 aa).

Helical transmembrane passes span 44–64 (IGNL…YATN) and 74–94 (VWNI…VILV).

It is found in the cell inner membrane. In terms of biological role, pycsar (pyrimidine cyclase system for antiphage resistance) provides immunity against bacteriophage. The pyrimidine cyclase (PycC) synthesizes cyclic nucleotides in response to infection; these serve as specific second messenger signals. The signals activate the adjacent effector, leading to bacterial cell death and abortive phage infection. A clade C Pycsar system. Functionally, the effector gene of a two-gene Pycsar system. Expression of this and adjacent uridylate cyclase TpPycC (AC A0A1T4LJ54) probably confers resistance to bacteriophage. The genes are probably only expressed in response to bacteriophage infection. Probably only responds to cUMP (produced by its cognate NTP cyclase), acts by impairing membrane integrity. The sequence is that of Pycsar effector protein TpPycTM from Treponema porcinum.